We begin with the raw amino-acid sequence, 118 residues long: Large ribosomal subunit protein bL20c (118 aa).

This sequence belongs to the bacterial ribosomal protein bL20 family.

Its subcellular location is the plastid. Binds directly to 23S ribosomal RNA and is necessary for the in vitro assembly process of the 50S ribosomal subunit. It is not involved in the protein synthesizing functions of that subunit. The protein is Large ribosomal subunit protein bL20c (rpl20) of Cuscuta reflexa (Southern Asian dodder).